The sequence spans 49 residues: Large ribosomal subunit protein bL33 (49 aa).

The protein belongs to the bacterial ribosomal protein bL33 family.

In Alkaliphilus metalliredigens (strain QYMF), this protein is Large ribosomal subunit protein bL33.